Here is a 466-residue protein sequence, read N- to C-terminus: MTIRVRFAPSPTGMLHIGGARTALFNYLFARHHGGQFLLRVEDTDRERSTPEATKVILDALDWLDLKPDEPPVYQSTRYARHREVAEQMLAAGQAYRCYCSREELAEMRAEAERSKKPFRYDGRWRDRDPAEAPAGVDPVIRLRAPREGETVIHDLVQGEVRVKNAELDDMILLRSDGTPTYLHAVVVDDHDMGITHVIRGDDHLTNTFRQAQIYDAMGWARPNFAHIPLIHGADGAKLSKRHGAVSVLQFRDEGYLPEALCNYLLRLGWGHGDAEILPREEQVALFDLDGVGRAASRMDYAKLLHVNAVFLRAAEDERLAADVVARLERDHGFPVSTEAAGRIAMLMPGLKDRARTLAELAESALFVVREAPLPMTEKAEALLTEAARDDLAALLLDFDKTDFSKAALHEAMKAYAEREEKKLGAIAQPLRAALTGSTVSPPIDAVMEALGPIEVRKRIFSVLGE.

The 'HIGH' region motif lies at 9–19; the sequence is PSPTGMLHIGG. Positions 238–242 match the 'KMSKS' region motif; sequence KLSKR. Lys241 lines the ATP pocket.

It belongs to the class-I aminoacyl-tRNA synthetase family. Glutamate--tRNA ligase type 1 subfamily. In terms of assembly, monomer.

Its subcellular location is the cytoplasm. The enzyme catalyses tRNA(Glu) + L-glutamate + ATP = L-glutamyl-tRNA(Glu) + AMP + diphosphate. Its function is as follows. Catalyzes the attachment of glutamate to tRNA(Glu) in a two-step reaction: glutamate is first activated by ATP to form Glu-AMP and then transferred to the acceptor end of tRNA(Glu). The chain is Glutamate--tRNA ligase 1 from Acidiphilium cryptum (strain JF-5).